Here is a 127-residue protein sequence, read N- to C-terminus: Large ribosomal subunit protein bL17 (127 aa).

Belongs to the bacterial ribosomal protein bL17 family. Part of the 50S ribosomal subunit. Contacts protein L32.

This is Large ribosomal subunit protein bL17 from Limosilactobacillus reuteri (strain DSM 20016) (Lactobacillus reuteri).